A 1179-amino-acid chain; its full sequence is MLDVNFFDSIQIGLASPERIRQWSRGEVKKPETINYRTLRPERDGLFCERIFGPTRDWECHCGKYKRVRYKGIVCDRCGVEVTRAKVRRERMGHIELAAPVSHIWYFKGIPSRMGLILDISPRALEKVLYFAAYIVTDPGDTPLMEKQLLTENEYREYREKYGDAFKAGMGAEAVKVLLEKLDLDKMAEELRHEVRTVSGQRKIRATRRLEVVEAFRKSGNRPEWMILEVIPVIPPDLRPMVQLDGGRFATSDLNDLYRRVINRNNRLKRLLDLGAPDIIVRNEKRMLQEAVDALIDNGRRGRPVTGPGNRPLKSLSDMLKGKQGRFRQNLLGKRVDYSGRSVIVVGPHLKLHQCGLPKEMALELFKPFVMKKLVNDGHAHNIKSAKRMVERMRPEVWDVLEEVIREHPVLLNRAPTLHRLGIQAFEPVLVEGRAIQIHPLVCTAYNADFDGDQMAVHVPLSAEAQAEARILMLAAHNILNPKDGQPVITPSKDMLLGSYYLTLPKPDSEPKMRFSHPHEALLAYQNGLVELHDWVEIRFPEPPKDLEPYSEEWWEHPDNWNTVSGKRIKTTIGRMIFNEVLHPKLRYINETIEKKWMGKIIDMAYRKLGTVKTAEQTDKIKDLGFRFATQSGATIAISDIKVPGDKDEILRQAEKEVDQVERNYRRGLITNDERYQRVIAIWSEAKEKVTSTLVKTMEDFNPVNMMMKSGARGNISQITQLAGMRGLMADPSGKIVELPVKANFREGLTVLEYFLSTHGTRKGLADTSLRTADSGYLTRRLVDVAQDVIVREDDCGTTAGITWTEEVDQFGNVIEPITPHIVGRVALNDIVHPETGEIIVYANEMIDEDLAEQILAAGIKEVTIRSVLTCRTRYGVCRACYGRNLATGRLVDVGEAVGIIAAQSIGEPGTQLTMRTFHTGGVAGDDITQGLPRVEELFEARKPKGQAIIAELDGEVSITEQKGRREITITSEDGESVTYSIPYGARVKVRSGQFVEAGDELTEGSVNPHDLLRVKGLRGVQRYLLREVQKVYNLQGVDINDKHIEIMVRQMLRKVKVEDPGDTDLLPGGFVDIFDFEDENERVIMEGGVPAVARPMLLGITKASLATDSFLSAASFQETTRVLTDAAIKGKRDPLLGLKENVIIGKLIPAGTGMGRYRNIKLFTEDDVYAEHLQGADD.

Zn(2+) is bound by residues Cys60, Cys62, Cys75, and Cys78. Mg(2+) is bound by residues Asp449, Asp451, and Asp453. Zn(2+) is bound by residues Cys796, Cys871, Cys878, and Cys881.

The protein belongs to the RNA polymerase beta' chain family. As to quaternary structure, the RNAP catalytic core consists of 2 alpha, 1 beta, 1 beta' and 1 omega subunit. When a sigma factor is associated with the core the holoenzyme is formed, which can initiate transcription. It depends on Mg(2+) as a cofactor. Zn(2+) is required as a cofactor.

The catalysed reaction is RNA(n) + a ribonucleoside 5'-triphosphate = RNA(n+1) + diphosphate. In terms of biological role, DNA-dependent RNA polymerase catalyzes the transcription of DNA into RNA using the four ribonucleoside triphosphates as substrates. This chain is DNA-directed RNA polymerase subunit beta', found in Symbiobacterium thermophilum (strain DSM 24528 / JCM 14929 / IAM 14863 / T).